Reading from the N-terminus, the 99-residue chain is Defensin-A4 (99 aa).

Positions 1–21 (MKTLCLLFAVLCLVTWTQARG) are cleaved as a signal peptide. Residues 22-68 (AEVEENLTAQDGEVDIAGDNGDVQLTLNTDDFESFTLKTLTLGHPRV) constitute a propeptide that is removed on maturation. 3 disulfides stabilise this stretch: C73–C97, C75–C89, and C79–C96.

It belongs to the alpha-defensin family. Lowly expressed in spleen, and expressed at lower levels in kidney and lung.

The protein resides in the secreted. In terms of biological role, has antimicrobial activity. The chain is Defensin-A4 from Ornithorhynchus anatinus (Duckbill platypus).